The chain runs to 150 residues: UPF0178 protein DMR_20710 (150 aa).

Belongs to the UPF0178 family.

In Solidesulfovibrio magneticus (strain ATCC 700980 / DSM 13731 / RS-1) (Desulfovibrio magneticus), this protein is UPF0178 protein DMR_20710.